A 557-amino-acid chain; its full sequence is MAAQGFLLIVTFLLVLMVLARPLGSGLARLINDIPLPGTTGVERVLFRVLGVSGLEMNWKQYLSAILGLNMLGLAVLFFMLLGQHYLPLNPQQLPGLSWDLALNTAVSFVTNTNWQSYSGETTLSYFSQMAGLTVQNFLSAASGIAVIFALIRAFTRQSMSTLGNAWVDLLRITLWVLAPVALLIALFFIQQGALQNFLPYQSVTTVEGAQQLLPMGPVASQEAIKMLGTNGGGFFNANSSHPFENPTALTNFVQMLAIFVIPTALCFAFGEVAGERRQGRMLLWAMSVIFVICVGVVMWAEVQGNPHLLALGADSSINMEGKESRFGVLVSSLFAVVTTAASCGAVIAMHDSFTALGGMVPMWLMQIGEVVFGGVGSGLYGMMLFVLLAVFIAGLMIGRTPEYLGKKIDVREMKLTALAILVTPTLVLMGAALAMMTDAGRSAMLNPGPHGFSEVLYAVSSAANNNGSAFAGLSANSPFWNCLLAFCMFVGRFGVIIPVMAIAGSLVSKKSQPASSGTLPTHGPLFVGLLIGTVLLVGALTFIPALALGPVAEYLS.

12 helical membrane-spanning segments follow: residues 5–25 (GFLL…PLGS), 63–83 (LSAI…MLLG), 132–152 (GLTV…FALI), 170–190 (LLRI…LFFI), 253–273 (FVQM…FGEV), 283–303 (LLWA…WAEV), 329–349 (VLVS…AVIA), 356–376 (ALGG…FGGV), 379–399 (GLYG…LMIG), 416–436 (LTAL…ALAM), 484–504 (LLAF…MAIA), and 526–546 (LFVG…FIPA).

It belongs to the KdpA family. As to quaternary structure, the system is composed of three essential subunits: KdpA, KdpB and KdpC.

The protein localises to the cell inner membrane. In terms of biological role, part of the high-affinity ATP-driven potassium transport (or Kdp) system, which catalyzes the hydrolysis of ATP coupled with the electrogenic transport of potassium into the cytoplasm. This subunit binds the periplasmic potassium ions and delivers the ions to the membrane domain of KdpB through an intramembrane tunnel. This is Potassium-transporting ATPase potassium-binding subunit from Escherichia fergusonii (strain ATCC 35469 / DSM 13698 / CCUG 18766 / IAM 14443 / JCM 21226 / LMG 7866 / NBRC 102419 / NCTC 12128 / CDC 0568-73).